The primary structure comprises 385 residues: DGRVKIGHYILGDTLGVGTFGKRREIQNLKLFRHPHIIKLYQVISTPSDIFMVMEYVSGGELFDYICKNGRLDEKESRRLFQQILSGVDYCHRHMVVHRDLKPENVLLDAHMNAKIADFGLSNMMSDGEFLRTSCGSPNYAAPEVISGRLYAGPEVDIWSSGVILYALLCGTLPFDDDHVPTLFKKICDGIFYTPQYLNPSVISLLKHMLQVDPMKRATIKDIREHEWFKQDLPKYLFPEDPSYSXTMIDDEALKQDPLAVAYHLIIDNRDFYLATSPPDSFLDDHHLTRVPFLVAETPRDELNPQKXKHQGVRKAKXHLGIRQLDYEXKVVNPYYLRVRRKKMSLQLYQVDSRTYLLDFRSIDDXIDAEAQGKSSEASLTXSVT.

In terms of domain architecture, Protein kinase spans 1–229 (DGRVKIGHYI…IKDIREHEWF (229 aa)). Thr14 carries the phosphothreonine modification. Residue 15 to 22 (LGVGTFGK) participates in ATP binding. The active-site Proton acceptor is the Asp100. Thr133 is modified (phosphothreonine; by LKB1 and CaMKK2). A phosphothreonine mark is found at Thr219 and Thr276. Residues 252–297 (EALKQDPLAVAYHLIIDNRDFYLATSPPDSFLDDHHLTRVPFLVAE) are AIS. Phosphoserine is present on Ser277. Ser281 is modified (phosphoserine; by ULK1). Thr289 carries the phosphothreonine; by ULK1 modification. The residue at position 298 (Thr298) is a Phosphothreonine. Ser353 and Ser383 each carry phosphoserine.

Belongs to the protein kinase superfamily. CAMK Ser/Thr protein kinase family. SNF1 subfamily. In terms of assembly, AMPK is a heterotrimer of an alpha catalytic subunit (PRKAA1 or PRKAA2), a beta (PRKAB1 or PRKAB2) and a gamma non-catalytic subunits (PRKAG1, PRKAG2 or PRKAG3). Interacts with FNIP1 and FNIP2. Mg(2+) is required as a cofactor. Ubiquitinated. In terms of processing, phosphorylated at Thr-133 by STK11/LKB1 in complex with STE20-related adapter-alpha (STRADA) pseudo kinase and CAB39. Also phosphorylated at Thr-133 by CAMKK2; triggered by a rise in intracellular calcium ions, without detectable changes in the AMP/ATP ratio. CAMKK1 can also phosphorylate Thr-133, but at a much lower level. Dephosphorylated by protein phosphatase 2A and 2C (PP2A and PP2C). Phosphorylated by ULK1 and ULK2; leading to negatively regulate AMPK activity and suggesting the existence of a regulatory feedback loop between ULK1, ULK2 and AMPK. Dephosphorylated by PPM1A and PPM1B. Post-translationally, glycosylated; O-GlcNAcylated by OGT, promoting the AMP-activated protein kinase (AMPK) activity.

It is found in the cytoplasm. It localises to the nucleus. It carries out the reaction L-seryl-[protein] + ATP = O-phospho-L-seryl-[protein] + ADP + H(+). The catalysed reaction is L-threonyl-[protein] + ATP = O-phospho-L-threonyl-[protein] + ADP + H(+). The enzyme catalyses L-seryl-[acetyl-CoA carboxylase] + ATP = O-phospho-L-seryl-[acetyl-CoA carboxylase] + ADP + H(+). It catalyses the reaction L-seryl-[3-hydroxy-3-methylglutaryl-coenzyme A reductase] + ATP = O-phospho-L-seryl-[3-hydroxy-3-methylglutaryl-coenzyme A reductase] + ADP + H(+). It carries out the reaction L-seryl-[tau protein] + ATP = O-phospho-L-seryl-[tau protein] + ADP + H(+). The catalysed reaction is L-threonyl-[tau protein] + ATP = O-phospho-L-threonyl-[tau protein] + ADP + H(+). Activated by phosphorylation on Thr-133. Binding of AMP to non-catalytic gamma subunit (PRKAG1, PRKAG2 or PRKAG3) results in allosteric activation, inducing phosphorylation on Thr-133. AMP-binding to gamma subunit also sustains activity by preventing dephosphorylation of Thr-133. ADP also stimulates Thr-133 phosphorylation, without stimulating already phosphorylated AMPK. ATP promotes dephosphorylation of Thr-133, rendering the enzyme inactive. Under physiological conditions AMPK mainly exists in its inactive form in complex with ATP, which is much more abundant than AMP. Selectively inhibited by compound C (6-[4-(2-Piperidin-1-yl-ethoxy)-phenyl)]-3-pyridin-4-yl-pyyrazolo[1,5-a] pyrimidine. Activated by resveratrol, a natural polyphenol present in red wine, and S17834, a synthetic polyphenol. Functionally, catalytic subunit of AMP-activated protein kinase (AMPK), an energy sensor protein kinase that plays a key role in regulating cellular energy metabolism. In response to reduction of intracellular ATP levels, AMPK activates energy-producing pathways and inhibits energy-consuming processes: inhibits protein, carbohydrate and lipid biosynthesis, as well as cell growth and proliferation. AMPK acts via direct phosphorylation of metabolic enzymes, and by longer-term effects via phosphorylation of transcription regulators. Regulates lipid synthesis by phosphorylating and inactivating lipid metabolic enzymes such as ACACA, ACACB, GYS1, HMGCR and LIPE; regulates fatty acid and cholesterol synthesis by phosphorylating acetyl-CoA carboxylase (ACACA and ACACB) and hormone-sensitive lipase (LIPE) enzymes, respectively. Promotes lipolysis of lipid droplets by mediating phosphorylation of isoform 1 of CHKA (CHKalpha2). Regulates insulin-signaling and glycolysis by phosphorylating IRS1, PFKFB2 and PFKFB3. AMPK stimulates glucose uptake in muscle by increasing the translocation of the glucose transporter SLC2A4/GLUT4 to the plasma membrane, possibly by mediating phosphorylation of TBC1D4/AS160. Regulates transcription and chromatin structure by phosphorylating transcription regulators involved in energy metabolism such as CRTC2/TORC2, FOXO3, histone H2B, HDAC5, MEF2C, MLXIPL/ChREBP, EP300, HNF4A, p53/TP53, SREBF1, SREBF2 and PPARGC1A. Acts as a key regulator of glucose homeostasis in liver by phosphorylating CRTC2/TORC2, leading to CRTC2/TORC2 sequestration in the cytoplasm. In response to stress, phosphorylates 'Ser-36' of histone H2B (H2BS36ph), leading to promote transcription. Acts as a key regulator of cell growth and proliferation by phosphorylating FNIP1, TSC2, RPTOR, WDR24 and ATG1/ULK1: in response to nutrient limitation, negatively regulates the mTORC1 complex by phosphorylating RPTOR component of the mTORC1 complex and by phosphorylating and activating TSC2. Also phosphorylates and inhibits GATOR2 subunit WDR24 in response to nutrient limitation, leading to suppress glucose-mediated mTORC1 activation. In response to energetic stress, phosphorylates FNIP1, inactivating the non-canonical mTORC1 signaling, thereby promoting nuclear translocation of TFEB and TFE3, and inducing transcription of lysosomal or autophagy genes. In response to nutrient limitation, promotes autophagy by phosphorylating and activating ATG1/ULK1. In that process also activates WDR45/WIPI4. Phosphorylates CASP6, thereby preventing its autoprocessing and subsequent activation. In response to nutrient limitation, phosphorylates transcription factor FOXO3 promoting FOXO3 mitochondrial import. Also acts as a regulator of cellular polarity by remodeling the actin cytoskeleton; probably by indirectly activating myosin. AMPK also acts as a regulator of circadian rhythm by mediating phosphorylation of CRY1, leading to destabilize it. May regulate the Wnt signaling pathway by phosphorylating CTNNB1, leading to stabilize it. Also has tau-protein kinase activity: in response to amyloid beta A4 protein (APP) exposure, activated by CAMKK2, leading to phosphorylation of MAPT/TAU; however the relevance of such data remains unclear in vivo. Also phosphorylates CFTR, EEF2K, KLC1, NOS3 and SLC12A1. Regulates hepatic lipogenesis. Activated via SIRT3, represses sterol regulatory element-binding protein (SREBP) transcriptional activities and ATP-consuming lipogenesis to restore cellular energy balance. Upon stress, regulates mitochondrial fragmentation through phosphorylation of MTFR1L. This chain is 5'-AMP-activated protein kinase catalytic subunit alpha-1 (PRKAA1), found in Sus scrofa (Pig).